Consider the following 194-residue polypeptide: Glycerol-3-phosphate acyltransferase (194 aa).

Transmembrane regions (helical) follow at residues 3-23 (IALLLLIAYLLGAIPTGLIVG), 47-67 (VLGKKAGIFVTIFDVAKGVLP), 78-97 (IHGIWFGLAAIIGHVYPIYL), 112-132 (ILGVNPVVFLIIAVIFFTLLF), and 153-173 (LFFDDIILQIISFLIMLLIII).

It belongs to the PlsY family. As to quaternary structure, probably interacts with PlsX.

The protein localises to the cell membrane. It carries out the reaction an acyl phosphate + sn-glycerol 3-phosphate = a 1-acyl-sn-glycero-3-phosphate + phosphate. It participates in lipid metabolism; phospholipid metabolism. Functionally, catalyzes the transfer of an acyl group from acyl-phosphate (acyl-PO(4)) to glycerol-3-phosphate (G3P) to form lysophosphatidic acid (LPA). This enzyme utilizes acyl-phosphate as fatty acyl donor, but not acyl-CoA or acyl-ACP. This chain is Glycerol-3-phosphate acyltransferase, found in Macrococcus caseolyticus (strain JCSC5402) (Macrococcoides caseolyticum).